The chain runs to 601 residues: MSFSGEMSNGKTDVTNGGFSSSPEDMSGAEEGKENSSGIEVEASDVSLSLTADETGTTQAESRDSCSETSGEDKDSDSMDDTGHYSINDENRGNDQSHSEDEEEEEEEDEEEEAVRHRKRAQRKRANRDQESSDEERALDDWLISEKTPLPPPQWRALSALRQRQMGSSTRFIYEACGARGFVQRFHLLHGLDGHSGCVNTLHFNQRGTCLASGSDDLKVVVWDWVRRKPVLEFESGHKSNVFQAKFLPNSGDSTLAMCARDGQVRVAELSATHCCKNTKRVAQHKGASHKLALEPDSPCTFLSAGEDAVVFTIDLRQDRPASRLVVTKEKESKVGLYTIYVNPANTYQFAVGGRDQFVRIYDQRKINENVNNGVLKKFCPHHLVTSEAKANITCLVYSHDGSELLASYNDEDIYLFNSSHSDGAEYIKRYKGHRNNATVKGVNFYGPRSEFVVSGSDCGHIFLWEKSSCQIVQFMDGDKGGVVNCLEPHPHLPVLATSGLDYDVKIWLPTAKEPTELDGLKEVIKKNKRERDEDSLHHTDLFDNHMLWFLMHHLRQRGQRRRRRDAGLGAGDAESDDSPSSSDSSDDDEDGPDRVQCIPS.

Composition is skewed to polar residues over residues 1–24 (MSFS…SSPE) and 46–60 (VSLS…TTQA). Residues 1–150 (MSFSGEMSNG…DWLISEKTPL (150 aa)) form a disordered region. Residues 39–50 (IEVEASDVSLSL) carry the Nuclear export signal motif. A compositionally biased stretch (basic and acidic residues) spans 61–99 (ESRDSCSETSGEDKDSDSMDDTGHYSINDENRGNDQSHS). The stretch at 94–131 (NDQSHSEDEEEEEEEDEEEEAVRHRKRAQRKRANRDQE) forms a coiled coil. The span at 100–113 (EDEEEEEEEDEEEE) shows a compositional bias: acidic residues. The segment covering 116-126 (RHRKRAQRKRA) has biased composition (basic residues). The span at 127-140 (NRDQESSDEERALD) shows a compositional bias: basic and acidic residues. WD repeat units follow at residues 194–233 (GHSG…PVLE), 237–278 (GHKS…CCKN), 284–324 (QHKG…PASR), 332–372 (ESKV…ENVN), 388–427 (EAKA…GAEY), 435–475 (RNNA…IVQF), and 479–519 (DKGG…TELD). A disordered region spans residues 561–601 (RRRRRDAGLGAGDAESDDSPSSSDSSDDDEDGPDRVQCIPS).

Belongs to the WD repeat DCAF8 family.

The protein localises to the nucleus. It is found in the cytoplasm. In Xenopus laevis (African clawed frog), this protein is DDB1- and CUL4-associated factor 8 (dcaf8).